Consider the following 165-residue polypeptide: Chorismate pyruvate-lyase (165 aa).

4 residues coordinate substrate: M35, R77, L115, and E156.

This sequence belongs to the UbiC family. In terms of assembly, monomer.

Its subcellular location is the cytoplasm. The enzyme catalyses chorismate = 4-hydroxybenzoate + pyruvate. It participates in cofactor biosynthesis; ubiquinone biosynthesis. Functionally, removes the pyruvyl group from chorismate, with concomitant aromatization of the ring, to provide 4-hydroxybenzoate (4HB) for the ubiquinone pathway. In Escherichia coli O127:H6 (strain E2348/69 / EPEC), this protein is Chorismate pyruvate-lyase.